We begin with the raw amino-acid sequence, 248 residues long: Membrane-spanning 4-domains subfamily A member 6A (248 aa).

The Cytoplasmic segment spans residues 1–46 (MTSQPVPNETIIVLPSNVINFSQAEKPEPTNQGQDSLKKHLHAEIK). The chain crosses the membrane as a helical span at residues 47–67 (VIGTIQILCGMMVLSLGIILA). At 68 to 84 (SASFSPNFTQVTSTLLN) the chain is on the extracellular side. A helical membrane pass occupies residues 85–105 (SAYPFIGPFFFIISGSLSIAT). Residues 106–116 (EKRLTKLLVHS) lie on the Cytoplasmic side of the membrane. Residues 117 to 137 (SLVGSILSALSALVGFIILSV) form a helical membrane-spanning segment. Over 138–185 (KQATLNPASLQCELDKNNIPTRSYVSYFYHDSLYTTDCYTAKASLAGT) the chain is Extracellular. A helical transmembrane segment spans residues 186 to 206 (LSLMLICTLLEFCLAVLTAVL). Topologically, residues 207–248 (RWKQAYSDFPGSVLFLPHSYIGNSGMSSKMTHDCGYEELLTS) are cytoplasmic.

The protein belongs to the MS4A family. In terms of tissue distribution, variable expression in some B-cell, myelomonocytic, and erythroleukemia cell lines.

The protein localises to the membrane. May be involved in signal transduction as a component of a multimeric receptor complex. This Homo sapiens (Human) protein is Membrane-spanning 4-domains subfamily A member 6A (MS4A6A).